Reading from the N-terminus, the 51-residue chain is Insulin (51 aa).

3 cysteine pairs are disulfide-bonded: cysteine 7-cysteine 37, cysteine 19-cysteine 50, and cysteine 36-cysteine 41.

Belongs to the insulin family. In terms of assembly, heterodimer of a B chain and an A chain linked by two disulfide bonds.

Its subcellular location is the secreted. In terms of biological role, insulin decreases blood glucose concentration. It increases cell permeability to monosaccharides, amino acids and fatty acids. It accelerates glycolysis, the pentose phosphate cycle, and glycogen synthesis in liver. The sequence is that of Insulin (INS) from Anser anser anser (Western greylag goose).